Consider the following 146-residue polypeptide: Large ribosomal subunit protein uL15 (146 aa).

The segment at 1–54 (MKLHELRPAAGSKSAPKRVGRGTGSGLGRNAGKGEKGQNARSGGGVRPGFEGGQ) is disordered. 2 stretches are compositionally biased toward gly residues: residues 21-31 (RGTGSGLGRNA) and 42-52 (SGGGVRPGFEG).

It belongs to the universal ribosomal protein uL15 family. In terms of assembly, part of the 50S ribosomal subunit.

Functionally, binds to the 23S rRNA. The polypeptide is Large ribosomal subunit protein uL15 (Clostridium perfringens (strain ATCC 13124 / DSM 756 / JCM 1290 / NCIMB 6125 / NCTC 8237 / Type A)).